Reading from the N-terminus, the 291-residue chain is Small ribosomal subunit protein uS2 (291 aa).

Belongs to the universal ribosomal protein uS2 family.

The chain is Small ribosomal subunit protein uS2 from Orientia tsutsugamushi (strain Boryong) (Rickettsia tsutsugamushi).